The primary structure comprises 313 residues: tRNA uridine(34) hydroxylase (313 aa).

A Rhodanese domain is found at 124–218; sequence SDPEVLLIDT…YLEEVPQEET (95 aa). Cys178 (cysteine persulfide intermediate) is an active-site residue.

The protein belongs to the TrhO family.

The catalysed reaction is uridine(34) in tRNA + AH2 + O2 = 5-hydroxyuridine(34) in tRNA + A + H2O. In terms of biological role, catalyzes oxygen-dependent 5-hydroxyuridine (ho5U) modification at position 34 in tRNAs. In Pseudomonas fluorescens (strain Pf0-1), this protein is tRNA uridine(34) hydroxylase.